Here is a 404-residue protein sequence, read N- to C-terminus: Odorant receptor 74a (404 aa).

Residues 1-38 (MSFHRYRPRLPGGELAPMPWPVSLYRVLNHVAWPLEAE) lie on the Cytoplasmic side of the membrane. The helical transmembrane segment at 39-59 (SGRWTVFLDRLMIFLGFLVFC) threads the bilayer. The Extracellular segment spans residues 60–67 (EHNEVDFH). A helical transmembrane segment spans residues 68–88 (YLIANRQDMDNMLTGLPTYLI). Residues 89–141 (LVEMQIRCFQLAWHKDRFRALLQRFYAEIYVSEEMEPHLFASIQRQMLATRVN) are Cytoplasmic-facing. A helical transmembrane segment spans residues 142 to 162 (STVYLLALLNFFLVPVTNVIY). The Extracellular segment spans residues 163–181 (HRREMLYKQVYPFDNTQLH). The helical transmembrane segment at 182-202 (FFIPLLVLNFWVGFIITSMLF) threads the bilayer. Over 203–274 (GELNVMGELM…QRVEKEFTLR (72 aa)) the chain is Cytoplasmic. A helical transmembrane segment spans residues 275–295 (IFVMFAFSAGLLCALFFKAFT). Residues 296–303 (NPWGNVAY) lie on the Extracellular side of the membrane. The chain crosses the membrane as a helical span at residues 304–324 (IVWFLAKFMELLALGMLGSIL). Over 325-380 (LKTTDELGMMYYTADWEQVIHQSDNVGENVKLMKLVTLAIQLNSRPFFITGLNYFR) the chain is Cytoplasmic. A helical transmembrane segment spans residues 381–401 (VSLTAVLKIIQGAFSYFTFLN). Residues 402–404 (SMR) are Extracellular-facing.

This sequence belongs to the insect chemoreceptor superfamily. Heteromeric odorant receptor channel (TC 1.A.69) family. Or1a subfamily. In terms of assembly, interacts with Orco. Complexes exist early in the endomembrane system in olfactory sensory neurons (OSNs), coupling these complexes to the conserved ciliary trafficking pathway.

The protein resides in the cell membrane. Odorant receptor which mediates acceptance or avoidance behavior, depending on its substrates. The odorant receptor repertoire encodes a large collection of odor stimuli that vary widely in identity, intensity, and duration. May form a complex with Orco to form odorant-sensing units, providing sensitive and prolonged odorant signaling and calcium permeability. Involved in the behavioral responses to octanol, anisole, and 2-heptanone. In Drosophila melanogaster (Fruit fly), this protein is Odorant receptor 74a (Or74a).